Consider the following 472-residue polypeptide: Protein translocase subunit SecD (472 aa).

6 consecutive transmembrane segments (helical) span residues 8–28 (ILFTVIVFVFALLGLILPLSG), 300–320 (TIINAGIIGLIIVMIYMIIFY), 325–347 (VIADIALIYNTFLLMGILSWTGA), 353–375 (GIAGIILTFGTTVDGNIIIYERI), 396–416 (VFSTIFDANITTILAGLVLFF), and 424–444 (GFAVTLIIGVLGAMFTNLVVS).

This sequence belongs to the SecD/SecF family. SecD subfamily. In terms of assembly, forms a complex with SecF. Part of the essential Sec protein translocation apparatus which comprises SecA, SecYEG and auxiliary proteins SecDF. Other proteins may also be involved.

The protein localises to the cell inner membrane. Part of the Sec protein translocase complex. Interacts with the SecYEG preprotein conducting channel. SecDF uses the proton motive force (PMF) to complete protein translocation after the ATP-dependent function of SecA. This is Protein translocase subunit SecD from Petrotoga mobilis (strain DSM 10674 / SJ95).